The chain runs to 1020 residues: Calcium-transporting ATPase 1 (1020 aa).

Position 1 is an N-acetylmethionine (Met1). The Stromal segment spans residues 1–162 (MESYLNENFG…NQFTESPSRG (162 aa)). The interval 21-32 (ALQRWRKLCWIV) is interaction with calmodulin. Ser46 bears the Phosphoserine; by CPK mark. The helical transmembrane segment at 163–183 (FWLFVWEALQDTTLMILAACA) threads the bilayer. Topologically, residues 184 to 201 (FVSLIVGILMEGWPIGAH) are lumenal. The chain crosses the membrane as a helical span at residues 202–222 (DGLGIVASILLVVFVTATSDY). At 223 to 350 (RQSLQFKDLD…DDETPLQVKL (128 aa)) the chain is on the stromal side. A helical membrane pass occupies residues 351–370 (NGVATIIGKIGLFFAVITFA). Residues 371-400 (VLVQGLANQKRLDNSHWIWTADELMAMLEY) are Lumenal-facing. Residues 401–418 (FAVAVTIVVVAVPEGLPL) traverse the membrane as a helical segment. Residues 419 to 813 (AVTLSLAFAM…KWGRSVYINI (395 aa)) lie on the Stromal side of the membrane. Asp456 functions as the 4-aspartylphosphate intermediate in the catalytic mechanism. Mg(2+)-binding residues include Asp758 and Asp762. Residues 814–832 (QKFVQFQLTVNVVALIVNF) form a helical membrane-spanning segment. The Lumenal segment spans residues 833 to 843 (LSACLTGNAPL). A helical transmembrane segment spans residues 844–864 (TAVQLLWVNMIMDTLGALALA). At 865-884 (TEPPQDDLMKRSPVGRKGNF) the chain is on the stromal side. The chain crosses the membrane as a helical span at residues 885–907 (ISNVMWRNILGQSLYQLVIIWCL). Residues 908 to 919 (QTKGKTMFGLDG) are Lumenal-facing. A helical transmembrane segment spans residues 920-941 (PDSDLTLNTLIFNIFVFCQVFN). Topologically, residues 942-959 (EISSREMEKIDVFKGILK) are stromal. The chain crosses the membrane as a helical span at residues 960-981 (NYVFVAVLTCTVVFQVIIIELL). Residues 982 to 991 (GTFADTTPLN) are Lumenal-facing. Residues 992-1013 (LGQWLVSIILGFLGMPVAAALK) form a helical membrane-spanning segment. The Stromal segment spans residues 1014–1020 (MIPVGSH).

Belongs to the cation transport ATPase (P-type) (TC 3.A.3) family. Type IIB subfamily. As to expression, expressed at higher levels in roots than in leaves.

It localises to the plastid. The protein resides in the chloroplast inner membrane. The enzyme catalyses Ca(2+)(in) + ATP + H2O = Ca(2+)(out) + ADP + phosphate + H(+). With respect to regulation, activated by calmodulin. This magnesium-dependent enzyme catalyzes the hydrolysis of ATP coupled with the translocation of calcium from the cytosol out of the cell or into organelles. This is Calcium-transporting ATPase 1 (ACA1) from Arabidopsis thaliana (Mouse-ear cress).